Reading from the N-terminus, the 601-residue chain is Glutathione-regulated potassium-efflux system protein KefB (601 aa).

13 helical membrane-spanning segments follow: residues 4–24, 29–49, 55–75, 87–107, 115–135, 152–172, 177–197, 207–227, 230–250, 268–288, 291–311, 324–344, and 356–376; these read SDFL…VPLA, IGAV…GLGF, EILH…GLEL, IFGV…GLLM, AAVV…LQLM, VLLF…LLAG, HFDW…LIGG, FIAA…LVLG, LFMD…GVLL, GLLL…GVLY, LLWV…VLYL, MQFA…FSTA, and ALLL…MKLV. The RCK N-terminal domain occupies 400-519; that stretch reads KPQVIVVGFG…AGVTQFSRET (120 aa).

It belongs to the monovalent cation:proton antiporter 2 (CPA2) transporter (TC 2.A.37) family. KefB subfamily. Interacts with the regulatory subunit KefG.

The protein localises to the cell inner membrane. Functionally, pore-forming subunit of a potassium efflux system that confers protection against electrophiles. Catalyzes K(+)/H(+) antiport. The polypeptide is Glutathione-regulated potassium-efflux system protein KefB (Escherichia coli (strain SMS-3-5 / SECEC)).